The primary structure comprises 43 residues: Protein PsbN (43 aa).

A helical transmembrane segment spans residues 5–27 (TLVAISISGLLVSFTGYALYTAF).

It belongs to the PsbN family.

It localises to the plastid. The protein localises to the chloroplast thylakoid membrane. May play a role in photosystem I and II biogenesis. This Coelogyne cristata (Orchid) protein is Protein PsbN.